A 235-amino-acid chain; its full sequence is Sugar fermentation stimulation protein homolog (235 aa).

Belongs to the SfsA family.

The polypeptide is Sugar fermentation stimulation protein homolog (Nitrosococcus oceani (strain ATCC 19707 / BCRC 17464 / JCM 30415 / NCIMB 11848 / C-107)).